The chain runs to 177 residues: Crossover junction endodeoxyribonuclease RuvC (177 aa).

Catalysis depends on residues Asp8, Glu72, and Asp144. Mg(2+) contacts are provided by Asp8, Glu72, and Asp144.

Belongs to the RuvC family. Homodimer which binds Holliday junction (HJ) DNA. The HJ becomes 2-fold symmetrical on binding to RuvC with unstacked arms; it has a different conformation from HJ DNA in complex with RuvA. In the full resolvosome a probable DNA-RuvA(4)-RuvB(12)-RuvC(2) complex forms which resolves the HJ. Mg(2+) is required as a cofactor.

The protein resides in the cytoplasm. The catalysed reaction is Endonucleolytic cleavage at a junction such as a reciprocal single-stranded crossover between two homologous DNA duplexes (Holliday junction).. Its function is as follows. The RuvA-RuvB-RuvC complex processes Holliday junction (HJ) DNA during genetic recombination and DNA repair. Endonuclease that resolves HJ intermediates. Cleaves cruciform DNA by making single-stranded nicks across the HJ at symmetrical positions within the homologous arms, yielding a 5'-phosphate and a 3'-hydroxyl group; requires a central core of homology in the junction. The consensus cleavage sequence is 5'-(A/T)TT(C/G)-3'. Cleavage occurs on the 3'-side of the TT dinucleotide at the point of strand exchange. HJ branch migration catalyzed by RuvA-RuvB allows RuvC to scan DNA until it finds its consensus sequence, where it cleaves and resolves the cruciform DNA. The polypeptide is Crossover junction endodeoxyribonuclease RuvC (Teredinibacter turnerae (strain ATCC 39867 / T7901)).